The following is a 390-amino-acid chain: Transposase for insertion sequence element IS256 in transposon Tn4001 (390 aa).

The protein belongs to the transposase mutator family.

Its function is as follows. Required for the transposition of the insertion element. This Enterococcus faecalis (strain ATCC 700802 / V583) protein is Transposase for insertion sequence element IS256 in transposon Tn4001.